A 267-amino-acid polypeptide reads, in one-letter code: 4,5-DOPA dioxygenase extradiol (267 aa).

Residues His9, His47, His168, and His222 each coordinate Zn(2+).

The protein belongs to the DODA-type extradiol aromatic ring-opening dioxygenase family. Zn(2+) serves as cofactor. Fe(2+) is required as a cofactor. In terms of tissue distribution, expressed in petals. Not detected in leaves, stems and roots.

It localises to the cytoplasm. It carries out the reaction L-dopa + O2 = 4-(L-alanin-3-yl)-2-hydroxy-cis,cis-muconate 6-semialdehyde + H(+). It participates in pigment biosynthesis; betalain biosynthesis. Its function is as follows. Opens the cyclic ring of dihydroxy-phenylalanine (DOPA) between carbons 4 and 5, thus producing an unstable seco-DOPA that rearranges nonenzymatically to betalamic acid. Produces mainly (S)-betalamic acid. Required for the coloration of flowers. The chain is 4,5-DOPA dioxygenase extradiol (DOD) from Mirabilis jalapa (Garden four-o'clock).